Reading from the N-terminus, the 207-residue chain is Small ribosomal subunit protein uS4 (207 aa).

The segment covering Lys-31–Gln-40 has biased composition (basic and acidic residues). The interval Lys-31–Leu-56 is disordered. Residues Gly-42–Gly-53 are compositionally biased toward polar residues. The S4 RNA-binding domain occupies Ser-97–Glu-158.

Belongs to the universal ribosomal protein uS4 family. As to quaternary structure, part of the 30S ribosomal subunit. Contacts protein S5. The interaction surface between S4 and S5 is involved in control of translational fidelity.

One of the primary rRNA binding proteins, it binds directly to 16S rRNA where it nucleates assembly of the body of the 30S subunit. Functionally, with S5 and S12 plays an important role in translational accuracy. The polypeptide is Small ribosomal subunit protein uS4 (Polynucleobacter necessarius subsp. necessarius (strain STIR1)).